Here is a 656-residue protein sequence, read N- to C-terminus: Exoribonuclease 2 (656 aa).

Residues 190–518 (RSDLTKTPFF…LNHRLIKSVL (329 aa)) form the RNB domain. Positions 564-649 (KWRYKAEIFD…ESGQLIGKLA (86 aa)) constitute an S1 motif domain.

Belongs to the RNR ribonuclease family. RNase II subfamily.

It localises to the cytoplasm. It catalyses the reaction Exonucleolytic cleavage in the 3'- to 5'-direction to yield nucleoside 5'-phosphates.. Functionally, involved in mRNA degradation. Hydrolyzes single-stranded polyribonucleotides processively in the 3' to 5' direction. The protein is Exoribonuclease 2 of Psychromonas ingrahamii (strain DSM 17664 / CCUG 51855 / 37).